The following is a 486-amino-acid chain: Galactose-1-phosphate uridylyltransferase (486 aa).

It belongs to the galactose-1-phosphate uridylyltransferase type 2 family.

The protein localises to the cytoplasm. The catalysed reaction is alpha-D-galactose 1-phosphate + UDP-alpha-D-glucose = alpha-D-glucose 1-phosphate + UDP-alpha-D-galactose. The protein operates within carbohydrate metabolism; galactose metabolism. The polypeptide is Galactose-1-phosphate uridylyltransferase (Lacticaseibacillus casei (strain BL23) (Lactobacillus casei)).